A 212-amino-acid polypeptide reads, in one-letter code: MFQSKDLNVYFICGTQDIPEGRTIQEVLKEALEGGITLYQFREKGNGAKTGQDKVALAKELQALCKSYNVPFIVNDDVALAEEIDADGIHVGQDDEAVDDFNNRFEGKIIGLSIGNLEELNASDLTYVDYIGVGPIFATPSKDDASEPVGPKMIETLRKEVGDLPIVAIGGISLDNVQEVAKTSADGVSVISAIARSPHVTETVHKFLQYFK.

Residues 40-44 (QFREK) and Asn75 contribute to the 4-amino-2-methyl-5-(diphosphooxymethyl)pyrimidine site. Positions 76 and 95 each coordinate Mg(2+). Ser113 is a 4-amino-2-methyl-5-(diphosphooxymethyl)pyrimidine binding site. Residue 139-141 (TPS) participates in 2-[(2R,5Z)-2-carboxy-4-methylthiazol-5(2H)-ylidene]ethyl phosphate binding. A 4-amino-2-methyl-5-(diphosphooxymethyl)pyrimidine-binding site is contributed by Lys142. Residues Gly171 and 191–192 (IS) each bind 2-[(2R,5Z)-2-carboxy-4-methylthiazol-5(2H)-ylidene]ethyl phosphate.

This sequence belongs to the thiamine-phosphate synthase family. Mg(2+) serves as cofactor.

The catalysed reaction is 2-[(2R,5Z)-2-carboxy-4-methylthiazol-5(2H)-ylidene]ethyl phosphate + 4-amino-2-methyl-5-(diphosphooxymethyl)pyrimidine + 2 H(+) = thiamine phosphate + CO2 + diphosphate. It carries out the reaction 2-(2-carboxy-4-methylthiazol-5-yl)ethyl phosphate + 4-amino-2-methyl-5-(diphosphooxymethyl)pyrimidine + 2 H(+) = thiamine phosphate + CO2 + diphosphate. The enzyme catalyses 4-methyl-5-(2-phosphooxyethyl)-thiazole + 4-amino-2-methyl-5-(diphosphooxymethyl)pyrimidine + H(+) = thiamine phosphate + diphosphate. It functions in the pathway cofactor biosynthesis; thiamine diphosphate biosynthesis; thiamine phosphate from 4-amino-2-methyl-5-diphosphomethylpyrimidine and 4-methyl-5-(2-phosphoethyl)-thiazole: step 1/1. Functionally, condenses 4-methyl-5-(beta-hydroxyethyl)thiazole monophosphate (THZ-P) and 2-methyl-4-amino-5-hydroxymethyl pyrimidine pyrophosphate (HMP-PP) to form thiamine monophosphate (TMP). This is Thiamine-phosphate synthase from Staphylococcus carnosus (strain TM300).